The sequence spans 503 residues: uncharacterized protein (503 aa).

Composition is skewed to basic and acidic residues over residues 1–23 (MAHEGPRQVRDRGMTRSKAEKVR) and 203–215 (PLEKLGDQSRSDQ). 2 disordered regions span residues 1–29 (MAHEGPRQVRDRGMTRSKAEKVRPPTVPV) and 149–227 (ETFQ…SNSS). Phosphoserine is present on residues Ser-239 and Ser-243. Disordered stretches follow at residues 346-370 (LDPARLPRPDMARSPSPKLWPGAKW) and 450-475 (LLSSSEPQRNDREGSASPPIHTGAPK). Residues 347-356 (DPARLPRPDM) show a composition bias toward basic and acidic residues.

This is an uncharacterized protein from Bos taurus (Bovine).